Consider the following 385-residue polypeptide: Putative ESX-1 scaffolding and assembly protein SaeC (385 aa).

Its subcellular location is the cytoplasm. Its function is as follows. May be involved in assembly of the ESX-1 / type VII specialized secretion system (T7SS), which exports several proteins including EsxA and EsxB. Involved in DNA conjugation in recipient (MKD8) strain. This Mycolicibacterium smegmatis (strain ATCC 700084 / mc(2)155) (Mycobacterium smegmatis) protein is Putative ESX-1 scaffolding and assembly protein SaeC.